A 317-amino-acid chain; its full sequence is Acetyl-coenzyme A carboxylase carboxyl transferase subunit alpha (317 aa).

One can recognise a CoA carboxyltransferase C-terminal domain in the interval Arg39 to Glu293.

It belongs to the AccA family. In terms of assembly, acetyl-CoA carboxylase is a heterohexamer composed of biotin carboxyl carrier protein (AccB), biotin carboxylase (AccC) and two subunits each of ACCase subunit alpha (AccA) and ACCase subunit beta (AccD).

The protein resides in the cytoplasm. The catalysed reaction is N(6)-carboxybiotinyl-L-lysyl-[protein] + acetyl-CoA = N(6)-biotinyl-L-lysyl-[protein] + malonyl-CoA. The protein operates within lipid metabolism; malonyl-CoA biosynthesis; malonyl-CoA from acetyl-CoA: step 1/1. Its function is as follows. Component of the acetyl coenzyme A carboxylase (ACC) complex. First, biotin carboxylase catalyzes the carboxylation of biotin on its carrier protein (BCCP) and then the CO(2) group is transferred by the carboxyltransferase to acetyl-CoA to form malonyl-CoA. The sequence is that of Acetyl-coenzyme A carboxylase carboxyl transferase subunit alpha from Neisseria gonorrhoeae (strain NCCP11945).